The following is a 247-amino-acid chain: (7aS)-7a-methyl-1,5-dioxo-2,3,5,6,7,7a-hexahydro-1H-indene-carboxyl-CoA hydrolase (247 aa).

It belongs to the enoyl-CoA hydratase/isomerase family.

The catalysed reaction is (7aS)-7a-methyl-1,5-dioxo-2,3,5,6,7,7a-hexahydro-1H-indene-carboxyl-CoA + H2O = (3E)-2-(2-carboxylatoethyl)-3-methyl-6-oxocyclohex-1-ene-1-carboxyl-CoA + H(+). The protein operates within steroid metabolism; cholesterol degradation. Its function is as follows. Involved in the final steps of cholesterol and steroid degradation. Catalyzes the hydrolytic ring D opening of (7aS)-7a-methyl-1,5-dioxo-2,3,5,6,7,7a-hexahydro-1H-indene-carboxyl-CoA (HIEC-CoA) to (3E)-2-(2-carboxylatoethyl)-3-methyl-6-oxocyclohex-1-ene-1-carboxyl-CoA (COCHEA-CoA). The chain is (7aS)-7a-methyl-1,5-dioxo-2,3,5,6,7,7a-hexahydro-1H-indene-carboxyl-CoA hydrolase from Mycobacterium tuberculosis (strain ATCC 25618 / H37Rv).